The chain runs to 105 residues: Large ribosomal subunit protein bL21 (105 aa).

Belongs to the bacterial ribosomal protein bL21 family. Part of the 50S ribosomal subunit. Contacts protein L20.

This protein binds to 23S rRNA in the presence of protein L20. This chain is Large ribosomal subunit protein bL21, found in Parafrankia sp. (strain EAN1pec).